The chain runs to 289 residues: MDHMQQQQRQQVGGGGGEEVAGRGGVPVCRPSGTRWTPTTEQIKILRELYYSCGIRSPNSEQIQRIAAMLRQYGRIEGKNVFYWFQNHKARERQKKRLTTLDVTTTTAAAADADASHLAVLSLSPTAAGATAPSFPGFYVGNGGAVQTDQANVVNWDCTAMAAEKTFLQDYMGVSGVGCAAGAAPTPWAMTTTTREPETLPLFPVVFVGGDGAHRHAVHGGFPSNFQRWGSAAATSNTITVQQHLQQHNFYSSSSSQLHSQDGPAAGTSLELTLSSYYCSCSPYPAGSM.

A compositionally biased stretch (low complexity) spans 1-11 (MDHMQQQQRQQ). The interval 1–34 (MDHMQQQQRQQVGGGGGEEVAGRGGVPVCRPSGT) is disordered. Over residues 12-25 (VGGGGGEEVAGRGG) the composition is skewed to gly residues. Positions 31-96 (PSGTRWTPTT…NHKARERQKK (66 aa)) form a DNA-binding region, homeobox; WUS-type.

It belongs to the WUS homeobox family. As to quaternary structure, interacts with TPR1, TPR2 and TPR3. As to expression, expressed in young leaf primordia. Expressed in branch an floral meristems. Transiently expressed in the shoot apex.

It is found in the nucleus. Functionally, transcription repressor required for the formation and development of tiller buds and panicles. Required for tiller formation and female sterility. Required for the early developmental stages of axillary meristem formation. Plays a role in maintaining the axillary premeristem zone and in promoting the formation of the axillary meristem by promoting OSH1 expression. Does not seem to be involved in maintenance of the shoot apical meristem (SAM). This is WUSCHEL-related homeobox 1 from Oryza sativa subsp. japonica (Rice).